We begin with the raw amino-acid sequence, 1425 residues long: Nephrocystin-4 (1425 aa).

At S145 the chain carries Phosphoserine. The interval 448–554 (FSLSSDGPTE…VSHLEADLSQ (107 aa)) is disordered. Composition is skewed to low complexity over residues 473–484 (PASPSGTPAPAA) and 507–530 (SPLS…SQSP). Positions 822-1425 (LTLANVGHAC…ETFCVKVLYQ (604 aa)) are sufficient for basal bodies localization.

This sequence belongs to the NPHP4 family. In terms of assembly, interacts with NPHP1 and RPGRIP1L/NPHP8; NPHP1, NPHP4 and RPGRIP1L are proposed to form a functional NPHP1-4-8 module localized to cell-cell contacts and the ciliary transition zone; NPHP4 mediates the interaction between NPHP1 and RPGRIP1L. Interacts with IQCB1/NPHP5; the interaction likely requires additional interactors. Interacts with RPGRIP1, CEP164, JADE1, PALS1, INADL, PARD6A, INVS, DVL2. Interacts with INTU; INTU mediates the interaction between NPHP4 and DAAM1. Interacts with JADE1. Interacts with SPATA7. As to expression, expressed in the retina (at protein level).

The protein localises to the cytoplasm. It is found in the cytoskeleton. The protein resides in the cilium basal body. It localises to the microtubule organizing center. Its subcellular location is the centrosome. The protein localises to the cell junction. It is found in the tight junction. Its function is as follows. Involved in the organization of apical junctions; the function is proposed to implicate a NPHP1-4-8 module. Does not seem to be strictly required for ciliogenesis. Required for building functional cilia. Involved in the organization of the subapical actin network in multiciliated epithelial cells. Seems to recruit INT to basal bodies of motile cilia which subsequently interacts with actin-modifying proteins such as DAAM1. In cooperation with INVS may down-regulate the canonical Wnt pathway and promote the Wnt-PCP pathway by regulating expression and subcellular location of disheveled proteins. Stabilizes protein levels of JADE1 and promotes its translocation to the nucleus leading to cooperative inhibition of canonical Wnt signaling. Acts as negative regulator of the hippo pathway by association with LATS1 and modifying LATS1-dependent phosphorylation and localization of WWTR1/TAZ. In Mus musculus (Mouse), this protein is Nephrocystin-4 (Nphp4).